A 118-amino-acid polypeptide reads, in one-letter code: MAGRSGDSDEDLLKAVRLIKFLYQSSSDPPPNPGGTRQARRNRRRRWRERQRQIHSISERILSTYLGRSAKPVPLQLPPLERLTLDCNEDCGTSGTQGVGSPQILVESPTVLESGTKE.

Ser5 and Ser8 each carry phosphoserine; by host CK2. A homomultimerization region spans residues 18–28; that stretch reads LIKFLYQSSSD. The disordered stretch occupies residues 23 to 52; the sequence is YQSSSDPPPNPGGTRQARRNRRRRWRERQR. The short motif at 36 to 52 is the Nuclear localization signal and RNA-binding (RRE) element; the sequence is TRQARRNRRRRWRERQR. A compositionally biased stretch (basic residues) spans 38-49; that stretch reads QARRNRRRRWRE. The Nuclear export signal and binding to XPO1 signature appears at 75–86; that stretch reads LQLPPLERLTLD. Residues 92–118 are disordered; it reads GTSGTQGVGSPQILVESPTVLESGTKE. Residues Ser94 and Ser101 each carry the phosphoserine; by host modification.

This sequence belongs to the HIV-1 REV protein family. In terms of assembly, homomultimer; when bound to the RRE. Multimeric assembly is essential for activity and may involve XPO1. Binds to human KPNB1, XPO1, TNPO1, RANBP5 and IPO7. Interacts with the viral Integrase. Interacts with human KHDRBS1. Interacts with human NAP1; this interaction decreases Rev multimerization and stimulates its activity. Interacts with human DEAD-box helicases DDX3 and DDX24; these interactions may serve for viral RNA export to the cytoplasm and packaging, respectively. Interacts with human PSIP1; this interaction may inhibit HIV-1 DNA integration by promoting dissociation of the Integrase-LEDGF/p75 complex. In terms of processing, asymmetrically arginine dimethylated at one site by host PRMT6. Methylation impairs the RNA-binding activity and export of viral RNA from the nucleus to the cytoplasm. Post-translationally, phosphorylated by protein kinase CK2. Presence of, and maybe binding to the N-terminus of the regulatory beta subunit of CK2 is necessary for CK2-mediated Rev's phosphorylation.

It localises to the host nucleus. Its subcellular location is the host nucleolus. The protein localises to the host cytoplasm. Escorts unspliced or incompletely spliced viral pre-mRNAs (late transcripts) out of the nucleus of infected cells. These pre-mRNAs carry a recognition sequence called Rev responsive element (RRE) located in the env gene, that is not present in fully spliced viral mRNAs (early transcripts). This function is essential since most viral proteins are translated from unspliced or partially spliced pre-mRNAs which cannot exit the nucleus by the pathway used by fully processed cellular mRNAs. Rev itself is translated from a fully spliced mRNA that readily exits the nucleus. Rev's nuclear localization signal (NLS) binds directly to KPNB1/Importin beta-1 without previous binding to KPNA1/Importin alpha-1. KPNB1 binds to the GDP bound form of RAN (Ran-GDP) and targets Rev to the nucleus. In the nucleus, the conversion from Ran-GDP to Ran-GTP dissociates Rev from KPNB1 and allows Rev's binding to the RRE in viral pre-mRNAs. Rev multimerization on the RRE via cooperative assembly exposes its nuclear export signal (NES) to the surface. Rev can then form a complex with XPO1/CRM1 and Ran-GTP, leading to nuclear export of the complex. Conversion from Ran-GTP to Ran-GDP mediates dissociation of the Rev/RRE/XPO1/RAN complex, so that Rev can return to the nucleus for a subsequent round of export. Beside KPNB1, also seems to interact with TNPO1/Transportin-1, RANBP5/IPO5 and IPO7/RANBP7 for nuclear import. The nucleoporin-like HRB/RIP is an essential cofactor that probably indirectly interacts with Rev to release HIV RNAs from the perinuclear region to the cytoplasm. The protein is Protein Rev of Human immunodeficiency virus type 1 group M subtype B (isolate LW123) (HIV-1).